The chain runs to 134 residues: Orexigenic neuropeptide QRFP (134 aa).

The signal sequence occupies residues 1–18 (MRSPYSLPYLLFLPLGAC). The propeptide occupies 19–88 (FPVLDTEEPV…RAGFQLRLGR (70 aa)). Phe131 is subject to Phenylalanine amide.

It belongs to the RFamide neuropeptide family. Ligand for the G-protein coupled receptor QRFPR/GPR103. In terms of tissue distribution, expressed in the hypothalamus.

The protein localises to the secreted. Stimulates feeding behavior, metabolic rate and locomotor activity and increases blood pressure. May have orexigenic activity. May promote aldosterone secretion by the adrenal gland. This is Orexigenic neuropeptide QRFP from Bos taurus (Bovine).